We begin with the raw amino-acid sequence, 2190 residues long: Highly-reducing polyketide synthase 1 (2190 aa).

Residues 6-431 (LTPVAIVGYA…GANAHVVLGA (426 aa)) form the Ketosynthase family 3 (KS3) domain. Catalysis depends on for beta-ketoacyl synthase activity residues Cys-179, His-315, and His-355. The 317-residue stretch at 541-857 (FVFTGQGAQW…VSVLARGQNA (317 aa)) folds into the Malonyl-CoA:ACP transacylase (MAT) domain. Positions 925–1061 (NDLLGSLADW…GLVGVRNSPA (137 aa)) are N-terminal hotdog fold. The PKS/mFAS DH domain occupies 925 to 1246 (NDLLGSLADW…MTPLRESSGS (322 aa)). His-957 serves as the catalytic Proton acceptor; for dehydratase activity. The C-terminal hotdog fold stretch occupies residues 1089 to 1246 (TETVDVQAMY…MTPLRESSGS (158 aa)). Asp-1154 functions as the Proton donor; for dehydratase activity in the catalytic mechanism. The Enoyl reductase (ER) domain occupies 1494–1804 (GSLDSFYFVD…SGKSMGKLVI (311 aa)). The Ketoreductase (KR) domain occupies 1828–2005 (ASYLIVGGTG…GTSLDLTAVS (178 aa)). Positions 2107–2184 (KALEVLYGAL…ELAKLISKKS (78 aa)) constitute a Carrier domain. Residue Ser-2144 is modified to O-(pantetheine 4'-phosphoryl)serine.

It depends on pantetheine 4'-phosphate as a cofactor.

Functionally, highly-reducing polyketide synthase; part of the gene cluster that mediates the biosynthesis of liamocins, glycolipids (also called heavy oils) composed of a single mannitol or arabitol headgroup linked to either three, four or even six 3,5-dihydroxydecanoic ester tail-groups. Within the pathway, PKS1 is responsible for biosynthesis of 3,5-dihydroxydecanoic acid from acetyl-CoA and malonyl-CoA. A phosphopantetheine transferase (PPTase) activates the HR-PKS. The esterase EST1 then catalyzes ester bond formation between 3,5-dihydroxydecanoic acid and mannitol (provided by the mannitol-1-phosphate 5-dehydrogenase and the NADP-dependent mannitol dehydrogenase) or arabinol (provided by the L-arabinitol 4-dehydrogenase). The polypeptide is Highly-reducing polyketide synthase 1 (Aureobasidium melanogenum (Aureobasidium pullulans var. melanogenum)).